Consider the following 512-residue polypeptide: tRNA-guanine(15) transglycosylase (512 aa).

The Nucleophile role is filled by aspartate 85. Aspartate 120 provides a ligand contact to substrate. Zn(2+) contacts are provided by cysteine 272, cysteine 274, and cysteine 277.

The protein belongs to the archaeosine tRNA-ribosyltransferase family. Zn(2+) serves as cofactor.

The enzyme catalyses guanosine(15) in tRNA + 7-cyano-7-deazaguanine = 7-cyano-7-carbaguanosine(15) in tRNA + guanine. Its pathway is tRNA modification; archaeosine-tRNA biosynthesis. In terms of biological role, exchanges the guanine residue with 7-cyano-7-deazaguanine (preQ0) at position 15 in the dihydrouridine loop (D-loop) of archaeal tRNAs. The chain is tRNA-guanine(15) transglycosylase from Aeropyrum pernix (strain ATCC 700893 / DSM 11879 / JCM 9820 / NBRC 100138 / K1).